Reading from the N-terminus, the 245-residue chain is 8-amino-3,8-dideoxy-manno-octulosonate cytidylyltransferase (245 aa).

Belongs to the KdsB family.

The protein resides in the cytoplasm. It carries out the reaction 8-amino-3,8-dideoxy-alpha-D-manno-octulosonate + CTP = CMP-8-amino-3,8-dideoxy-alpha-D-manno-oct-2-ulosonate + diphosphate. Its pathway is bacterial outer membrane biogenesis; lipopolysaccharide biosynthesis. Activates KDO8N (a required 8-carbon sugar) for incorporation into bacterial lipopolysaccharide in the Shewanella genus. In Shewanella sp. (strain MR-7), this protein is 8-amino-3,8-dideoxy-manno-octulosonate cytidylyltransferase.